The sequence spans 996 residues: Phototropin-1 (996 aa).

The interval 1-184 (MEPTEKPSTK…PGGRSGIPRV (184 aa)) is disordered. Residues Ser-23 and Ser-58 each carry the phosphoserine modification. The segment covering 49–59 (QNLSDPRGTSP) has biased composition (polar residues). The segment covering 60–70 (QPRPQQEPAPS) has biased composition (pro residues). Over residues 141 to 153 (SGGTENDPNGKKT) the composition is skewed to polar residues. The span at 155 to 166 (SQRNSQNSCRSS) shows a compositional bias: low complexity. The PAS 1 domain maps to 184–257 (VSEDLKDALS…AKIRETLAAG (74 aa)). At Ser-185 the chain carries Phosphoserine. Residue Asn-233 coordinates FMN. The residue at position 234 (Cys-234) is an S-4a-FMN cysteine. Residues Arg-235, Gln-238, Arg-251, Asn-266, Asn-276, Gln-297, and Lys-302 each coordinate FMN. The PAC 1 domain occupies 258 to 312 (NNYCGRILNYKKDGTSFWNLLTIAPIKDESGKVLKFIGMQVEVSKHTEGAKEKAL). 3 positions are modified to phosphoserine: Ser-350, Ser-376, and Ser-410. 2 disordered regions span residues 351–413 (ESTN…SLSF) and 434–453 (YGEE…SVDD). Residues 434–443 (YGEEDDEISD) are compositionally biased toward acidic residues. Over residues 444-453 (RDERPESVDD) the composition is skewed to basic and acidic residues. The residue at position 450 (Ser-450) is a Phosphoserine. The PAS 2 domain occupies 462–535 (KGIDLATTLE…KKIRNAIDNQ (74 aa)). FMN is bound at residue Asn-511. At Cys-512 the chain carries S-4a-FMN cysteine. Positions 513, 516, 529, 544, 554, 556, and 575 each coordinate FMN. In terms of domain architecture, PAC 2 spans 536–590 (TEVTVQLINYTKSGKKFWNIFHLQPMRDQKGEVQYFIGVQLDGSKHVEPVRNVIE). The Protein kinase domain occupies 663 to 952 (FKPVKPLGSG…ANEVKQHSFF (290 aa)). ATP-binding positions include 669-677 (LGSGDTGSV) and Lys-692. Residue Asp-788 is the Proton acceptor of the active site. Residues 806–862 (DFDLSCLTSCKPQLLIPSIDEKKKKKQQKSQQTPIFMAEPMRASNSFVGTEEYIAPE) are activation loop.

The protein belongs to the protein kinase superfamily. AGC Ser/Thr protein kinase family. Homodimer; disulfide-linked. Interacts with PKS1, PKS2, RPT2, RPT3, PHOT2 and BLUS1. Subunit of a complex made of CAR6, PHOT1 and RPT3/NPH3. Associates with CBC1 and CBC2. Binds to BHP. FMN is required as a cofactor. Autophosphorylated at Ser-185, Ser-350 and Ser-410 in response to blue light irradiation. Post-translationally, 2 molecules of FMN bind covalently to cysteines after exposure to blue light and are reversed in the dark. As to expression, present in guard cells (at protein level).

The protein resides in the cell membrane. The protein localises to the cytoplasm. The enzyme catalyses L-seryl-[protein] + ATP = O-phospho-L-seryl-[protein] + ADP + H(+). The catalysed reaction is L-threonyl-[protein] + ATP = O-phospho-L-threonyl-[protein] + ADP + H(+). Autophosphorylation is inhibited by staurosporine, but not by tyrphostin 9, sphingosine, GW5074 and BML-265. In terms of biological role, protein kinase that acts as a blue light (BL) photoreceptor in a signal-transduction pathway for photo-induced movements. Triggers the phosphorylation of AHA1 and AHA2 C-terminal penultimate Thr in guard cells to activate them and induce stomatal opening in response to blue light (BL). Also phosphorylates BLUS1, a kinase involved in stomatal opening. Mediates the phosphorylation of CBC1 in stomata, but not of CBC2, in response to blue light. Required for blue light mediated mRNA destabilization. Mediates calcium spiking of extracellular origin in response to a low rate of blue light. Also mediates rapid membrane depolarization and growth inhibition in response to blue light. Necessary for root phototropism. Involved in hypocotyl phototropism under a low rate but not under a high rate of blue light. Contributes to the chloroplast accumulation but seems not to be required for chloroplast translocation. Regulates stomata opening and photomorphogenesis response of leaf tissue. Confers sensitivity to drought. Not involved in hypocotyl elongation inhibition, anthocyanin accumulation or cotyledon opening. Involved in the regulation of leaf position and morphology via the phosphorylation of ABCB19 during blue light responses to modulate auxin distribution. The sequence is that of Phototropin-1 from Arabidopsis thaliana (Mouse-ear cress).